The following is a 115-amino-acid chain: Replication initiation control protein YabA (115 aa).

Zn(2+) is bound by residues histidine 90, cysteine 92, cysteine 106, and cysteine 109.

The protein belongs to the YabA family. Homotetramer. Interacts with both DnaA and DnaN, acting as a bridge between these two proteins. It depends on Zn(2+) as a cofactor.

It localises to the cytoplasm. The protein resides in the nucleoid. Its function is as follows. Involved in control of chromosome replication initiation. Inhibits the cooperative binding of DnaA to the oriC region, thus negatively regulating initiation of chromosome replication. Inhibits the ability of DnaA-ATP to form a helix on DNA; does not disassemble preformed DnaA-DNA helices. Decreases the residence time of DnaA on the chromosome at its binding sites (oriC, replication forks and promoter-binding sites). Tethers DnaA to the replication machinery via the DNA polymerase beta sliding clamp subunit (dnaN). Associates with oriC and other DnaA targets on the chromosome in a DnaA-dependent manner. This chain is Replication initiation control protein YabA, found in Staphylococcus aureus (strain JH1).